The chain runs to 187 residues: Bis(5'-nucleosyl)-tetraphosphatase, symmetrical (187 aa).

The region spanning 18–132 (RYQHTIGVME…IFLADYIEPN (115 aa)) is the HD domain. An ADP-binding site is contributed by His-21. Fe cation-binding residues include His-21, His-50, and Asp-51. Residues 51–54 (DYAK), His-83, 109–110 (HT), Asp-127, Arg-133, and 170–175 (PIYPDT) contribute to the ADP site. A Fe cation-binding site is contributed by Asp-127.

It belongs to the Ap4A hydrolase YqeK family. Homodimer.

The enzyme catalyses P(1),P(4)-bis(5'-adenosyl) tetraphosphate + H2O = 2 ADP + 2 H(+). Functionally, hydrolyzes diadenosine 5',5'''-P1,P4-tetraphosphate (Ap4A) to yield ADP. This chain is Bis(5'-nucleosyl)-tetraphosphatase, symmetrical, found in Halalkalibacterium halodurans (strain ATCC BAA-125 / DSM 18197 / FERM 7344 / JCM 9153 / C-125) (Bacillus halodurans).